The primary structure comprises 58 residues: Small ribosomal subunit protein bS21 (58 aa).

Positions 32 to 42 (ARRREHYEKPS) are enriched in basic and acidic residues. Residues 32–58 (ARRREHYEKPSVRRKKKSEAARKRRWH) are disordered. Residues 43 to 58 (VRRKKKSEAARKRRWH) show a composition bias toward basic residues.

This sequence belongs to the bacterial ribosomal protein bS21 family.

The polypeptide is Small ribosomal subunit protein bS21 (Moorella thermoacetica (strain ATCC 39073 / JCM 9320)).